The sequence spans 385 residues: Glucans biosynthesis protein C (385 aa).

A run of 10 helical transmembrane segments spans residues 17–37, 60–80, 91–111, 137–157, 173–193, 212–232, 239–259, 274–294, 311–331, and 338–358; these read AWLM…SHTW, MQVF…RYPL, VGIP…IMLQ, ISHL…VWIF, KFSM…YAVI, FIVM…LAFI, LFTT…VAYL, TESV…FSFG, ASLF…AYIT, and WLGF…LYEI.

Belongs to the acyltransferase 3 family. OpgC subfamily.

It localises to the cell membrane. It participates in glycan metabolism; osmoregulated periplasmic glucan (OPG) biosynthesis. Functionally, necessary for the succinyl substitution of periplasmic glucans. Could catalyze the transfer of succinyl residues from the cytoplasmic side of the membrane to the nascent glucan backbones on the periplasmic side of the membrane. This is Glucans biosynthesis protein C from Shigella sonnei (strain Ss046).